Here is a 285-residue protein sequence, read N- to C-terminus: Golgi to ER traffic protein 2 (285 aa).

Residues 1 to 10 (MSELTEAEKR) show a composition bias toward basic and acidic residues. 2 disordered regions span residues 1 to 72 (MSEL…KEDS) and 87 to 106 (MQGQGTGKSTPQDSSTPDLL). The residue at position 2 (Ser-2) is an N-acetylserine. Residues 2–148 (SELTEAEKRR…LDYHDYLLNR (147 aa)) are Cytoplasmic-facing. Basic residues predominate over residues 11 to 20 (RLLRERRQKK). The span at 24 to 42 (GGASSRLNKITGQASSHLN) shows a compositional bias: polar residues. Ser-45 bears the Phosphoserine mark. The span at 49-60 (APSAAKTTPPAS) shows a compositional bias: low complexity. The span at 93–104 (GKSTPQDSSTPD) shows a compositional bias: polar residues. The helical transmembrane segment at 149–169 (LKAWTILVKWVFFLLPYLYLI) threads the bilayer. Over 170-196 (TRPNSSVWPAYAFTQSAWFAPLRNPSN) the chain is Lumenal. N-linked (GlcNAc...) asparagine glycosylation is found at Asn-173 and Asn-196. Residues 197 to 216 (FTRIFATFEFLSISIYYQLL) traverse the membrane as a helical segment. Topologically, residues 217–263 (KNVEHKSKIKNLQDTNKLVKLVSLVPEGVIPVANLKGKLITLLQYWD) are cytoplasmic. A helical transmembrane segment spans residues 264–284 (LLSMLITDISFVLIVLGLLTY). Residue Leu-285 is a topological domain, lumenal.

Belongs to the GET2 family. In terms of assembly, component of the Golgi to ER traffic (GET) complex, which is composed of GET1, GET2 and GET3. Within the complex, GET1 and GET2 form a heterotetramer which is stabilized by phosphatidylinositol binding and which binds to the GET3 homodimer.

The protein localises to the endoplasmic reticulum membrane. Its subcellular location is the golgi apparatus membrane. Its function is as follows. Required for the post-translational delivery of tail-anchored (TA) proteins to the endoplasmic reticulum. Together with GET1, acts as a membrane receptor for soluble GET3, which recognizes and selectively binds the transmembrane domain of TA proteins in the cytosol. The GET complex cooperates with the HDEL receptor ERD2 to mediate the ATP-dependent retrieval of resident ER proteins that contain a C-terminal H-D-E-L retention signal from the Golgi to the ER. Involved in DNA replication and DNA damage response and also in cell wall function. The polypeptide is Golgi to ER traffic protein 2 (Saccharomyces cerevisiae (strain RM11-1a) (Baker's yeast)).